Reading from the N-terminus, the 689-residue chain is DNA ligase (689 aa).

NAD(+) contacts are provided by residues 40-44 (DSEYD), 89-90 (SL), and Glu-121. Residue Lys-123 is the N6-AMP-lysine intermediate of the active site. NAD(+) contacts are provided by Arg-144, Glu-179, Lys-295, and Lys-319. 4 residues coordinate Zn(2+): Cys-413, Cys-416, Cys-431, and Cys-437. A BRCT domain is found at 610–689 (REQSSLTDKI…EEWLTLIKNV (80 aa)).

Belongs to the NAD-dependent DNA ligase family. LigA subfamily. Mg(2+) is required as a cofactor. The cofactor is Mn(2+).

It catalyses the reaction NAD(+) + (deoxyribonucleotide)n-3'-hydroxyl + 5'-phospho-(deoxyribonucleotide)m = (deoxyribonucleotide)n+m + AMP + beta-nicotinamide D-nucleotide.. Its function is as follows. DNA ligase that catalyzes the formation of phosphodiester linkages between 5'-phosphoryl and 3'-hydroxyl groups in double-stranded DNA using NAD as a coenzyme and as the energy source for the reaction. It is essential for DNA replication and repair of damaged DNA. The sequence is that of DNA ligase from Rickettsia rickettsii (strain Iowa).